Consider the following 662-residue polypeptide: Bifunctional polymyxin resistance protein ArnA (662 aa).

A formyltransferase ArnAFT region spans residues Met1 to Leu307. The Proton donor; for formyltransferase activity role is filled by His106. Residues Arg116 and Val138 to Asp142 each bind (6R)-10-formyltetrahydrofolate. The segment at Arg316 to Ala662 is dehydrogenase ArnADH. NAD(+) is bound by residues Asp349 and Asp370–Ile371. UDP-alpha-D-glucuronate is bound by residues Ala395, Tyr400, and Thr434–Ser435. The active-site Proton acceptor; for decarboxylase activity is Glu436. UDP-alpha-D-glucuronate contacts are provided by residues Arg462, Asn493, Arg527–Arg536, and Tyr614. Arg620 (proton donor; for decarboxylase activity) is an active-site residue.

This sequence in the N-terminal section; belongs to the Fmt family. UDP-L-Ara4N formyltransferase subfamily. The protein in the C-terminal section; belongs to the NAD(P)-dependent epimerase/dehydratase family. UDP-glucuronic acid decarboxylase subfamily. As to quaternary structure, homohexamer, formed by a dimer of trimers.

It carries out the reaction UDP-alpha-D-glucuronate + NAD(+) = UDP-beta-L-threo-pentopyranos-4-ulose + CO2 + NADH. The enzyme catalyses UDP-4-amino-4-deoxy-beta-L-arabinose + (6R)-10-formyltetrahydrofolate = UDP-4-deoxy-4-formamido-beta-L-arabinose + (6S)-5,6,7,8-tetrahydrofolate + H(+). The protein operates within nucleotide-sugar biosynthesis; UDP-4-deoxy-4-formamido-beta-L-arabinose biosynthesis; UDP-4-deoxy-4-formamido-beta-L-arabinose from UDP-alpha-D-glucuronate: step 1/3. It functions in the pathway nucleotide-sugar biosynthesis; UDP-4-deoxy-4-formamido-beta-L-arabinose biosynthesis; UDP-4-deoxy-4-formamido-beta-L-arabinose from UDP-alpha-D-glucuronate: step 3/3. It participates in bacterial outer membrane biogenesis; lipopolysaccharide biosynthesis. Its function is as follows. Bifunctional enzyme that catalyzes the oxidative decarboxylation of UDP-glucuronic acid (UDP-GlcUA) to UDP-4-keto-arabinose (UDP-Ara4O) and the addition of a formyl group to UDP-4-amino-4-deoxy-L-arabinose (UDP-L-Ara4N) to form UDP-L-4-formamido-arabinose (UDP-L-Ara4FN). The modified arabinose is attached to lipid A and is required for resistance to polymyxin and cationic antimicrobial peptides. The sequence is that of Bifunctional polymyxin resistance protein ArnA from Pseudomonas paraeruginosa (strain DSM 24068 / PA7) (Pseudomonas aeruginosa (strain PA7)).